The primary structure comprises 663 residues: Transcriptional repressor CTCFL (663 aa).

A compositionally biased stretch (basic and acidic residues) spans 24-51; the sequence is EKGLKEEEKDGVCREKDHRSPSELEAER. Disordered regions lie at residues 24 to 55 and 221 to 250; these read EKGLKEEEKDGVCREKDHRSPSELEAERTSGA and NSNVEEQEDQPTAGQADAEKAKSTKNQRKT. C2H2-type zinc fingers lie at residues 257-279, 285-307, 313-336, 342-364, 370-392, 398-421, 428-451, 458-480, 486-508, and 514-537; these read FHCDVCMFTSSRMSSFNRHMKTH, HLCHLCLKTFRTVTLLRNHVNTH, YKCNDCNMAFVTSGELVRHRRYKH, FKCSMCKYASVEASKLKRHVRSH, FQCCQCSYASRDTYKLKRHMRTH, YECHICHTRFTQSGTMKIHILQKH, YQCPHCATIIARKSDLRVHMRNLH, LKCRYCSAVFHERYALIQHQKTH, FKCKHCSYACKQERHMTAHIRTH, and FTCLSCNKCFRQKQLLNAHFRKYH. The segment at 546–568 adopts a C2H2-type 11; atypical zinc-finger fold; it reads YKCSKCGKGFSRWINLHRHSEKC. The disordered stretch occupies residues 569 to 630; sequence GSGEAKSAAS…STTKGEQFPG (62 aa). Positions 580–590 are enriched in basic residues; it reads KGRRTRKRKQT. Over residues 594–607 the composition is skewed to basic and acidic residues; the sequence is EATKGQKEAAKGWK. The span at 608–620 shows a compositional bias: low complexity; sequence EAANGDEAAAEEA.

The protein belongs to the CTCF zinc-finger protein family. In terms of assembly, interacts with histones, PRMT7 and SETD1A. Interacts (via N-terminus) with BAG6/BAT3. In terms of tissue distribution, testis specific. Specifically expressed in primary spermatocytes.

It localises to the cytoplasm. The protein resides in the nucleus. Its function is as follows. Testis-specific DNA binding protein responsible for insulator function, nuclear architecture and transcriptional control, which probably acts by recruiting epigenetic chromatin modifiers. Plays a key role in gene imprinting in male germline, by participating in the establishment of differential methylation at the IGF2/H19 imprinted control region (ICR). Directly binds the unmethylated H19 ICR and recruits the PRMT7 methyltransferase, leading to methylate histone H4 'Arg-3' to form H4R3sme2. This probably leads to recruit de novo DNA methyltransferases at these sites. Seems to act as tumor suppressor. In association with DNMT1 and DNMT3B, involved in activation of BAG1 gene expression by binding to its promoter. Required for dimethylation of H3 lysine 4 (H3K4me2) of MYC and BRCA1 promoters. The chain is Transcriptional repressor CTCFL (CTCFL) from Homo sapiens (Human).